A 406-amino-acid polypeptide reads, in one-letter code: LIM/homeobox protein Lhx1 (406 aa).

2 consecutive LIM zinc-binding domains span residues 4 to 54 (CAGC…CKND) and 63 to 117 (CAGC…CKED). Disordered regions lie at residues 128–187 (NSLH…RTTI) and 293–374 (YDFF…EVFG). Low complexity predominate over residues 137-148 (SDPSLSPDSQDP). Positions 151-167 (DDAKDSESANVSDKEAG) are enriched in basic and acidic residues. Ser162 is modified (phosphoserine). The segment at residues 180 to 239 (RRGPRTTIKAKQLETLKAAFAATPKPTRHIREQLAQETGLNMRVIQVWFQNRRSKERRMK) is a DNA-binding region (homeobox). Positions 315–327 (PSSGPSGTPLGGL) are enriched in low complexity. Positions 352 to 362 (GDSPSPEPSLP) are enriched in pro residues.

In terms of assembly, interacts with LDB1 via the tandem LIM domains. As to expression, expressed in the brain, thymus, and tonsils. Expressed in samples from patients with chronic myeloid leukemia (CML) and in 58% of acute myeloid leukemia (AML) cell lines.

The protein localises to the nucleus. In terms of biological role, potential transcription factor. May play a role in early mesoderm formation and later in lateral mesoderm differentiation and neurogenesis. In Homo sapiens (Human), this protein is LIM/homeobox protein Lhx1 (LHX1).